The following is a 769-amino-acid chain: Protein lethal(2)denticleless (769 aa).

WD repeat units follow at residues 99 to 129 (CHFNAVFDLEWAPGQMRFVSASGDHTARLWE), 143 to 174 (GHTRSVKSAAFKRTDPAVFATGGRDGAILIWD), 194 to 249 (GHTG…KVWD), 264 to 303 (RHKLPYAGSSTFRGFTNLIVDASGTRLYANCMDNTIYCYN), 320 to 349 (NSTFYIKSCLSPDGKYLLSGSSDERAYIWN), and 362 to 393 (GHTVEVTCVAWGSSHDCPIVTCSDDARHKIWR). Residues 196–221 (TGGPGTPVSQRKQRTRTPKMAGGTTS) form a disordered region. Phosphothreonine is present on Thr-201. Ser-204 carries the post-translational modification Phosphoserine. Disordered stretches follow at residues 448-467 (RLMDQNERTPGSVEKTTTKR), 476-562 (AGQE…HVYT), and 655-769 (SPRL…VGSD). Phosphothreonine is present on Thr-456. Ser-459 carries the post-translational modification Phosphoserine. Residues 503-518 (PSSQETACRHIQLQSI) show a composition bias toward polar residues. A Phosphoserine modification is found at Ser-524. Positions 524–533 (SPSKRQKENS) are enriched in basic and acidic residues. Over residues 546–562 (STPSHSPLSENVNHVYT) the composition is skewed to polar residues. Ser-655 carries the phosphoserine modification. The span at 657 to 666 (RLQSLRQSEC) shows a compositional bias: polar residues. A phosphoserine mark is found at Ser-679, Ser-691, and Ser-711. Low complexity predominate over residues 689–704 (AGSSSHSHSQSQPKTP). Residues 705–714 (TSSRRNSETT) are compositionally biased toward polar residues. The span at 728–743 (PAEETTTTNAAPSSSD) shows a compositional bias: low complexity. A compositionally biased stretch (polar residues) spans 758–769 (SMRTPTTAVGSD).

It belongs to the WD repeat cdt2 family. As to quaternary structure, component of the DCX(DTL) E3 ubiquitin ligase complex, at least composed of Cul-4, pic/DDB1, l(2)dtl/CDT2 and Roc1a. In terms of tissue distribution, ubiquitously expressed during embryogenesis with no sign of tissue specificity in expression up to stage 17.

The protein localises to the cytoplasm. It functions in the pathway protein modification; protein ubiquitination. Substrate-specific adapter of a DCX (DDB1-CUL4-X-box) E3 ubiquitin-protein ligase complex required for cell cycle control. The DCX(DTL) complex, also named CRL4(CDT2) complex, mediates the polyubiquitination and subsequent degradation of E2f during S phase. E2f degradation is necessary to ensure proper development. Substrates require their interaction with PCNA for their polyubiquitination: substrates interact with PCNA via their PIP-box, leading to recruit the DCX(DTL) complex. The chain is Protein lethal(2)denticleless (l(2)dtl) from Drosophila melanogaster (Fruit fly).